The primary structure comprises 544 residues: Lysophosphatidylcholine acyltransferase 2 (544 aa).

At 1–58 the chain is on the cytoplasmic side; it reads MNRCAEAAAVAATVPGSGVGDSGLRPPMVPRQASFFPPPVPNPFVQQTRISAARRLQM. Residues 59-79 form a helical; Signal-anchor for type II membrane protein membrane-spanning segment; sequence ILLGIILLPVRALLVGLVLLL. The Lumenal portion of the chain corresponds to 80–544; that stretch reads AWPFAVISTV…EEGTSGKKVD (465 aa). The short motif at 146–151 is the HXXXXD motif element; sequence HSTFFD. The EGTC motif motif lies at 220–223; that stretch reads EGTC. EF-hand domains lie at 391–426 and 428–463; these read PVSDVLRQLFALFDRNNDGSIDFREYVIGLAVLCNP and NTEDIIQVAFKLFDVDEDGYITEEEFCTILQASLGV. The Ca(2+) site is built by D404, N406, D408, S410, E415, D441, D443, D445, Y447, and E452. Residues 520 to 530 show a composition bias toward polar residues; it reads TAPSVASNKVS. The tract at residues 520–544 is disordered; sequence TAPSVASNKVSPESHEEGTSGKKVD. Over residues 531–544 the composition is skewed to basic and acidic residues; sequence PESHEEGTSGKKVD.

Belongs to the 1-acyl-sn-glycerol-3-phosphate acyltransferase family.

It localises to the endoplasmic reticulum membrane. It is found in the golgi apparatus membrane. Its subcellular location is the cell membrane. The protein localises to the lipid droplet. It catalyses the reaction a 1-acyl-sn-glycero-3-phosphocholine + an acyl-CoA = a 1,2-diacyl-sn-glycero-3-phosphocholine + CoA. It carries out the reaction a 1-O-alkyl-sn-glycero-3-phosphocholine + acetyl-CoA = a 1-O-alkyl-2-acetyl-sn-glycero-3-phosphocholine + CoA. The catalysed reaction is a 1-acyl-sn-glycero-3-phosphate + an acyl-CoA = a 1,2-diacyl-sn-glycero-3-phosphate + CoA. The enzyme catalyses a 1-O-(1Z-alkenyl)-sn-glycero-3-phosphocholine + an acyl-CoA = a 1-O-(1Z-alkenyl)-2-acyl-sn-glycero-3-phosphocholine + CoA. It catalyses the reaction 1-hexadecanoyl-sn-glycero-3-phosphate + (9Z)-octadecenoyl-CoA = 1-hexadecanoyl-2-(9Z-octadecenoyl)-sn-glycero-3-phosphate + CoA. It carries out the reaction 1-(9Z-octadecenoyl)-sn-glycero-3-phosphate + (9Z)-octadecenoyl-CoA = 1,2-di-(9Z-octadecenoyl)-sn-glycero-3-phosphate + CoA. The catalysed reaction is 1-(9Z-octadecenoyl)-sn-glycero-3-phosphate + hexadecanoyl-CoA = 1-(9Z)-octadecenoyl-2-hexadecanoyl-sn-glycero-3-phosphate + CoA. The enzyme catalyses 1-heptadecanoyl-sn-glycero-3-phosphate + (9Z)-octadecenoyl-CoA = 1-heptadecanoyl-2-(9Z)-octadecenoyl-sn-glycero-3-phosphate + CoA. It catalyses the reaction 1-octadecanoyl-sn-glycero-3-phosphate + (9Z)-octadecenoyl-CoA = 1-octadecanoyl-2-(9Z-octadecenoyl)-sn-glycero-3-phosphate + CoA. It carries out the reaction heptadecanoyl-CoA + 1-(9Z-octadecenoyl)-sn-glycero-3-phosphate = 1-(9Z)-octadecenoyl-2-heptadecanoyl-sn-glycero-3-phosphate + CoA. The catalysed reaction is 1-(9Z-octadecenoyl)-sn-glycero-3-phosphate + (9Z,12Z)-octadecadienoyl-CoA = 1-(9Z)-octadecenoyl-2-(9Z,12Z)-octadecadienoyl-sn-glycero-3-phosphate + CoA. The enzyme catalyses 1-(9Z-octadecenoyl)-sn-glycero-3-phosphate + tetradecanoyl-CoA = 1-(9Z)-octadecenoyl-2-tetradecanoyl-sn-glycero-3-phosphate + CoA. It catalyses the reaction pentadecanoyl-CoA + 1-(9Z-octadecenoyl)-sn-glycero-3-phosphate = 1-(9Z)-octadecenoyl-2-pentadecanoyl-sn-glycero-3-phosphate + CoA. It carries out the reaction nonadecanoyl-CoA + 1-(9Z-octadecenoyl)-sn-glycero-3-phosphate = 1-(9Z)-octadecenoyl-2-nonadecanoyl-sn-glycero-3-phosphate + CoA. The catalysed reaction is 1-hexadecanoyl-sn-glycero-3-phosphocholine + (9Z)-octadecenoyl-CoA = 1-hexadecanoyl-2-(9Z-octadecenoyl)-sn-glycero-3-phosphocholine + CoA. The enzyme catalyses 1-O-hexadecyl-sn-glycero-3-phosphocholine + acetyl-CoA = 1-O-hexadecyl-2-acetyl-sn-glycero-3-phosphocholine + CoA. It catalyses the reaction 1-O-octadecyl-sn-glycero-3-phosphocholine + acetyl-CoA = 1-O-octadecyl-2-acetyl-sn-glycero-3-phosphocholine + CoA. It carries out the reaction 1-hexadecanoyl-sn-glycero-3-phosphocholine + acetyl-CoA = 1-hexadecanoyl-2-acetyl-sn-glycero-3-phosphocholine + CoA. The catalysed reaction is 1-octadecanoyl-sn-glycero-3-phosphocholine + acetyl-CoA = 1-octadecanoyl-2-acetyl-sn-glycero-3-phosphocholine + CoA. The enzyme catalyses a 1-O-(1Z-alkenyl)-sn-glycero-3-phosphocholine + acetyl-CoA = 1-O-(1Z)-alkenyl-2-acetyl-sn-glycero-3-phosphocholine + CoA. It catalyses the reaction 1-O-octadecyl-sn-glycero-3-phosphocholine + (5Z,8Z,11Z,14Z)-eicosatetraenoyl-CoA = 1-O-octadecyl-2-(5Z,8Z,11Z,14Z)-eicosatetraenoyl-sn-glycero-3-phosphocholine + CoA. The protein operates within lipid metabolism; phospholipid metabolism. Its function is as follows. Exhibits both acyltransferase and acetyltransferase activities. Activity is calcium-dependent. Catalyzes the conversion of lysophosphatidylcholine (1-acyl-sn-glycero-3-phosphocholine or LPC) into phosphatidylcholine (1,2-diacyl-sn-glycero-3-phosphocholine or PC). Catalyzes the conversion 1-acyl-sn-glycerol-3-phosphate (lysophosphatidic acid or LPA) into 1,2-diacyl-sn-glycerol-3-phosphate (phosphatidic acid or PA) by incorporating an acyl moiety at the sn-2 position of the glycerol backbone. Involved in platelet-activating factor (PAF) biosynthesis by catalyzing the conversion of the PAF precursor, 1-O-alkyl-sn-glycero-3-phosphocholine (lyso-PAF) into 1-O-alkyl-2-acetyl-sn-glycero-3-phosphocholine (PAF). Also converts lyso-PAF to 1-O-alkyl-2-acyl-sn-glycero-3-phosphocholine (PC), a major component of cell membranes and a PAF precursor. Under resting conditions, acyltransferase activity is preferred. Upon acute inflammatory stimulus, acetyltransferase activity is enhanced and PAF synthesis increases. Involved in the regulation of lipid droplet number and size. This is Lysophosphatidylcholine acyltransferase 2 (Lpcat2) from Rattus norvegicus (Rat).